The sequence spans 25 residues: SPbeta prophage-derived uncharacterized protein YotF (25 aa).

The chain is SPbeta prophage-derived uncharacterized protein YotF (yotF) from Bacillus subtilis (strain 168).